We begin with the raw amino-acid sequence, 259 residues long: Dysbindin domain-containing protein 2 (259 aa).

Disordered stretches follow at residues 27–56 and 174–259; these read SCER…PVSR and ADVF…GACS. Pro residues predominate over residues 32–46; it reads SPPPPLPHFRLPPLP. Residues 205–223 are compositionally biased toward low complexity; that stretch reads TSDRTTSRTSSSSSSDSST. A phosphoserine mark is found at S217 and S218. Position 237 is a phosphothreonine (T237). S242 is modified (phosphoserine).

It belongs to the dysbindin family. In terms of assembly, monomer. Interacts with CSNK1D and CSNK1E. As to expression, detected in brain.

Its function is as follows. May modulate the activity of casein kinase-1. Inhibits CSNK1D autophosphorylation (in vitro). This is Dysbindin domain-containing protein 2 (DBNDD2) from Homo sapiens (Human).